The following is a 286-amino-acid chain: Release factor glutamine methyltransferase (286 aa).

S-adenosyl-L-methionine contacts are provided by residues 120–124, D143, W172, and N187; that span reads GTGSG. Residue 187–190 coordinates substrate; the sequence is NPPY.

The protein belongs to the protein N5-glutamine methyltransferase family. PrmC subfamily.

It catalyses the reaction L-glutaminyl-[peptide chain release factor] + S-adenosyl-L-methionine = N(5)-methyl-L-glutaminyl-[peptide chain release factor] + S-adenosyl-L-homocysteine + H(+). Its function is as follows. Methylates the class 1 translation termination release factors RF1/PrfA and RF2/PrfB on the glutamine residue of the universally conserved GGQ motif. This chain is Release factor glutamine methyltransferase, found in Gloeobacter violaceus (strain ATCC 29082 / PCC 7421).